A 453-amino-acid polypeptide reads, in one-letter code: Probable exopolygalacturonase B (453 aa).

A signal peptide spans 1 to 16 (MKFFALAALFASTVNS). N185 and N225 each carry an N-linked (GlcNAc...) asparagine glycan. D255 functions as the Proton donor in the catalytic mechanism. The cysteines at positions 257 and 274 are disulfide-linked. 2 N-linked (GlcNAc...) asparagine glycosylation sites follow: N263 and N275. H278 is a catalytic residue. PbH1 repeat units lie at residues 295-316 (IENV…RLKA) and 327-348 (INNV…VLDQ). N302, N329, N354, and N366 each carry an N-linked (GlcNAc...) asparagine glycan. Residues 362–405 (PSRVNFTNIVFEDIYGTSSGKRGKVVADLTCSPNAVCSGIRLKN) form a PbH1 3 repeat. A disulfide bridge connects residues C392 and C398. An N-linked (GlcNAc...) asparagine glycan is attached at N436.

Belongs to the glycosyl hydrolase 28 family.

The protein resides in the secreted. It catalyses the reaction [(1-&gt;4)-alpha-D-galacturonosyl](n) + H2O = alpha-D-galacturonate + [(1-&gt;4)-alpha-D-galacturonosyl](n-1). Its function is as follows. Specific in hydrolyzing the terminal glycosidic bond of polygalacturonic acid and oligogalacturonates. The chain is Probable exopolygalacturonase B (pgxB) from Aspergillus fumigatus (strain ATCC MYA-4609 / CBS 101355 / FGSC A1100 / Af293) (Neosartorya fumigata).